We begin with the raw amino-acid sequence, 334 residues long: Putative fatty acid elongase 1 (334 aa).

At 1 to 51 (MDLTGAHMLKIHRPSIDHPFGVDLWHLFEQLSIKTIGWNPSEFEYIPGKTP) the chain is on the lumenal side. The helical transmembrane segment at 52–72 (MSQWSSVIVSITAYYVIILSG) threads the bilayer. At 73–86 (RAIMTNRKPLKQRR) the chain is on the cytoplasmic side. Residues 87-107 (LFQLHNFILTIISGALLALLV) form a helical membrane-spanning segment. The Lumenal segment spans residues 108–135 (EEVFRNYMRNGLFYCVCDSRHFTQRLVT). Residues 136–156 (LYYLNYLTKYLELMDTVFLFL) traverse the membrane as a helical segment. At 157 to 160 (KKKP) the chain is on the cytoplasmic side. The helical transmembrane segment at 161–181 (LAFLHCYHHGITALLCFTQLL) threads the bilayer. The Lumenal portion of the chain corresponds to 182 to 187 (GRTSVQ). Residues 188-208 (WGVIGLNLYVHVIMYSYYFLA) traverse the membrane as a helical segment. Over 209–224 (ACGRRVWWKQWVTRVQ) the chain is Cytoplasmic. Residues 225–245 (IIQFVLDLILCYFGTYSHIAF) traverse the membrane as a helical segment. Over 246–260 (RYFPWLPHVGDCSGS) the chain is Lumenal. Residues 261–281 (LFAAFFGCGVLSSYLFLFIGF) form a helical membrane-spanning segment. The Cytoplasmic portion of the chain corresponds to 282-334 (YINTYIKRGAKKNQRKAAGKADNTSVAAAAGSEALAATTATNASPFSARSRKL). Residue Ser325 is modified to Phosphoserine.

This sequence belongs to the ELO family.

The protein resides in the endoplasmic reticulum membrane. It catalyses the reaction a very-long-chain acyl-CoA + malonyl-CoA + H(+) = a very-long-chain 3-oxoacyl-CoA + CO2 + CoA. Functionally, may be involved in the synthesis of very long chain fatty acids. The protein is Putative fatty acid elongase 1 of Schizosaccharomyces pombe (strain 972 / ATCC 24843) (Fission yeast).